Reading from the N-terminus, the 1181-residue chain is Pesticidal crystal protein Cry1Ae (1181 aa).

This sequence belongs to the delta endotoxin family.

In terms of biological role, promotes colloidosmotic lysis by binding to the midgut epithelial cells of many lepidopteran larvae. In Bacillus thuringiensis subsp. alesti, this protein is Pesticidal crystal protein Cry1Ae (cry1Ae).